Consider the following 156-residue polypeptide: Melatonin receptor type 1A (156 aa).

A run of 3 helical transmembrane segments spans residues 19 to 39 (LCYV…NLQT), 62 to 82 (TIAL…FCYL), and 115 to 135 (FVVF…GLIV).

Belongs to the G-protein coupled receptor 1 family. In terms of tissue distribution, at least in the brain, more precisely in the pars tuberalis and the suprachiasmatic nucleus.

It localises to the cell membrane. Functionally, high affinity receptor for melatonin. Likely to mediate the reproductive and circadian actions of melatonin. The activity of this receptor is mediated by pertussis toxin sensitive G proteins that inhibit adenylate cyclase activity. Possibly involved in sleep induction, by melatonin activation of the potassium channel KCNMA1/BK and the dissociation of G-beta and G-gamma subunits, thereby decreasing synaptic transmission. The protein is Melatonin receptor type 1A (Mtnr1a) of Rattus norvegicus (Rat).